The sequence spans 907 residues: Eukaryotic translation initiation factor 4 gamma 2 (907 aa).

Position 1 is an N-acetylmethionine (M1). The tract at residues 1-71 (MESAIAEGGA…SAANNSANEK (71 aa)) is disordered. S11 carries the post-translational modification Phosphoserine. Positions 78–308 (FRKVRGILNK…QDTVELREHH (231 aa)) constitute an MIF4G domain. T89 bears the Phosphothreonine mark. The residue at position 360 (R360) is an Omega-N-methylarginine. The residue at position 395 (S395) is a Phosphoserine. K431 is modified (N6-methyllysine). Residue S443 is modified to Phosphoserine. Positions 498–541 (PPSAQPPRTQTPPLGQTPQLGLKTNPPLIQEKPAKTSKKPPPSK) are disordered. Residues 503-516 (PPRTQTPPLGQTPQ) are compositionally biased toward polar residues. R505 bears the Omega-N-methylarginine mark. Phosphothreonine is present on residues T508 and T514. Residues 543–666 (ELLKLTETVV…SISELAQPLE (124 aa)) enclose the MI domain. Residue K575 forms a Glycyl lysine isopeptide (Lys-Gly) (interchain with G-Cter in SUMO2) linkage. The W2 domain occupies 720–904 (EGKGLSFLFP…ETAEEEESEE (185 aa)). Residue S902 is modified to Phosphoserine.

Belongs to the eukaryotic initiation factor 4G family. As to quaternary structure, interacts with the serine/threonine protein kinases MKNK1 and MKNK2. Binds EIF4A and EIF3. Interacts with MIF4GD. Interacts with DAZAP2. Phosphorylation; hyperphosphorylated during mitosis.

Functionally, appears to play a role in the switch from cap-dependent to IRES-mediated translation during mitosis, apoptosis and viral infection. Cleaved by some caspases and viral proteases. The polypeptide is Eukaryotic translation initiation factor 4 gamma 2 (Oryctolagus cuniculus (Rabbit)).